The following is a 494-amino-acid chain: Ell-associated factor Eaf (494 aa).

Residues 119-138 (KTRSEVTNKPSLMSATNAPM) show a composition bias toward polar residues. Disordered regions lie at residues 119–212 (KTRS…PAWH) and 243–494 (QANI…DDDD). The segment covering 139 to 156 (SNGAPVPSSAAAGTGSAG) has biased composition (low complexity). The span at 159–178 (ENSTMRISSKTKVSTGSRRN) shows a compositional bias: polar residues. Ser-188 bears the Phosphoserine mark. 2 stretches are compositionally biased toward polar residues: residues 243-256 (QANISGSSTGSSAG) and 280-306 (QQLTQRSSPPMQQQQHQNYGRGSNNYA). Low complexity predominate over residues 307-319 (QQQQQQQQQQLQQ). Residues 320–332 (RASFSHSNHSNSM) show a composition bias toward polar residues. Over residues 344 to 373 (QTAQSMAQAAAALEQQIGGELSASSSSSES) the composition is skewed to low complexity. Positions 374-389 (DSSDSDSGSDSDDSTE) are enriched in acidic residues. The span at 414 to 424 (HQQQQHMHQLP) shows a compositional bias: low complexity. Residues 437-454 (SHHHHQQQQQSHHHHHHQ) are compositionally biased toward basic residues. Composition is skewed to low complexity over residues 455–464 (QQQQQQHQQS) and 475–488 (NDLLQNDLQLSSNS).

This sequence belongs to the EAF family.

The protein localises to the nucleus. Functionally, promotes transcriptional elongation by Su(Tpl)/ELL. Essential for development. This chain is Ell-associated factor Eaf, found in Drosophila virilis (Fruit fly).